Consider the following 489-residue polypeptide: CDK5RAP3 protein homolog (489 aa).

The protein belongs to the CDK5RAP3 family.

Its function is as follows. Substrate adapter of E3 ligase complexes mediating ufmylation, the covalent attachment of the ubiquitin-like modifier UFM1 to substrate proteins, and which is involved in various processes, such as ribosome recycling and reticulophagy (also called ER-phagy). The polypeptide is CDK5RAP3 protein homolog (Caenorhabditis elegans).